Here is a 520-residue protein sequence, read N- to C-terminus: Maturase K (520 aa).

The protein belongs to the intron maturase 2 family. MatK subfamily.

It localises to the plastid. It is found in the chloroplast. Usually encoded in the trnK tRNA gene intron. Probably assists in splicing its own and other chloroplast group II introns. The sequence is that of Maturase K from Aspidistra elatior (Cast-iron plant).